The sequence spans 560 residues: Putative transport protein VS_1837 (560 aa).

A run of 5 helical transmembrane segments spans residues 5-25 (VVLLLKQNPILLIFVVLSIGL), 37-57 (LGNSIGVLITSLIMGHLGFSF), 66-86 (FMLFIYCVGIEAGPNFFGIFF), 91-111 (HYLILSLVVLSTAIALTYFCS), and 155-175 (LGLVIENLSVGYAMAYLVGLI). RCK C-terminal domains are found at residues 203–292 (RGLG…FRNG) and 293–376 (KEVF…KIGF). The next 6 membrane-spanning stretches (helical) occupy residues 386-406 (LTAFCSFFILGILFGLITMTF), 409-429 (VSFGLGNAVGLLLSGIMLGFL), 450-470 (LGLMFFMVGIGLSAGGKIFEH), 478-498 (VIGIALIVSVLPVFFAYLVGA), 506-526 (ALLFGAIIGARTCAPAMDIVN), and 539-559 (AGTYAIANILMTLAGTFIIII).

It belongs to the AAE transporter (TC 2.A.81) family. YbjL subfamily.

Its subcellular location is the cell membrane. The sequence is that of Putative transport protein VS_1837 from Vibrio atlanticus (strain LGP32) (Vibrio splendidus (strain Mel32)).